A 270-amino-acid polypeptide reads, in one-letter code: Phosphatidylglycerol--prolipoprotein diacylglyceryl transferase (270 aa).

The next 4 helical transmembrane spans lie at 19 to 39, 56 to 76, 92 to 112, and 116 to 136; these read FPVYWYGIIIGTGVLLGLWLA, LVLIAVPIAILFARMYYVIFE, QGGLAIHGGLIGAVITGILFA, and GVSFWKLADIAAPSILLGQAI. Arg-138 contributes to the a 1,2-diacyl-sn-glycero-3-phospho-(1'-sn-glycerol) binding site. 3 helical membrane passes run 178 to 198, 206 to 226, and 236 to 256; these read HPTFLYESLWNFAGVILLLAL, GELFFTYLIWYSVGRFFVEGL, and LRIAQVMSIGLVVISIIFIIV.

The protein belongs to the Lgt family.

The protein resides in the cell membrane. The enzyme catalyses L-cysteinyl-[prolipoprotein] + a 1,2-diacyl-sn-glycero-3-phospho-(1'-sn-glycerol) = an S-1,2-diacyl-sn-glyceryl-L-cysteinyl-[prolipoprotein] + sn-glycerol 1-phosphate + H(+). Its pathway is protein modification; lipoprotein biosynthesis (diacylglyceryl transfer). Functionally, catalyzes the transfer of the diacylglyceryl group from phosphatidylglycerol to the sulfhydryl group of the N-terminal cysteine of a prolipoprotein, the first step in the formation of mature lipoproteins. The sequence is that of Phosphatidylglycerol--prolipoprotein diacylglyceryl transferase from Bacillus cereus (strain Q1).